Here is a 286-residue protein sequence, read N- to C-terminus: Phosphatidylserine decarboxylase proenzyme (286 aa).

Catalysis depends on charge relay system; for autoendoproteolytic cleavage activity residues D90, H147, and S252. The active-site Schiff-base intermediate with substrate; via pyruvic acid; for decarboxylase activity is the S252. A Pyruvic acid (Ser); by autocatalysis modification is found at S252.

This sequence belongs to the phosphatidylserine decarboxylase family. PSD-B subfamily. Prokaryotic type I sub-subfamily. Heterodimer of a large membrane-associated beta subunit and a small pyruvoyl-containing alpha subunit. The cofactor is pyruvate. Post-translationally, is synthesized initially as an inactive proenzyme. Formation of the active enzyme involves a self-maturation process in which the active site pyruvoyl group is generated from an internal serine residue via an autocatalytic post-translational modification. Two non-identical subunits are generated from the proenzyme in this reaction, and the pyruvate is formed at the N-terminus of the alpha chain, which is derived from the carboxyl end of the proenzyme. The autoendoproteolytic cleavage occurs by a canonical serine protease mechanism, in which the side chain hydroxyl group of the serine supplies its oxygen atom to form the C-terminus of the beta chain, while the remainder of the serine residue undergoes an oxidative deamination to produce ammonia and the pyruvoyl prosthetic group on the alpha chain. During this reaction, the Ser that is part of the protease active site of the proenzyme becomes the pyruvoyl prosthetic group, which constitutes an essential element of the active site of the mature decarboxylase.

The protein resides in the cell membrane. It catalyses the reaction a 1,2-diacyl-sn-glycero-3-phospho-L-serine + H(+) = a 1,2-diacyl-sn-glycero-3-phosphoethanolamine + CO2. The protein operates within phospholipid metabolism; phosphatidylethanolamine biosynthesis; phosphatidylethanolamine from CDP-diacylglycerol: step 2/2. Catalyzes the formation of phosphatidylethanolamine (PtdEtn) from phosphatidylserine (PtdSer). This Ectopseudomonas mendocina (strain ymp) (Pseudomonas mendocina) protein is Phosphatidylserine decarboxylase proenzyme.